The following is a 505-amino-acid chain: Beta-glucosidase 18 (505 aa).

An N-terminal signal peptide occupies residues 1 to 26 (MAGGSKTRIHASLVSTLLLLLPLASA). Q46 lines the a beta-D-glucoside pocket. N-linked (GlcNAc...) asparagine glycosylation is present at N55. A beta-D-glucoside is bound by residues H148 and 193 to 194 (NE). E194 (proton donor) is an active-site residue. C213 and C220 are oxidised to a cystine. Residue Y337 participates in a beta-D-glucoside binding. C345 and C350 are disulfide-bonded. A beta-D-glucoside is bound by residues E408, W457, 464 to 465 (EW), and F473. The active-site Nucleophile is the E408.

Belongs to the glycosyl hydrolase 1 family. In terms of tissue distribution, expressed in roots, leaves, flowers and pollen.

It carries out the reaction Hydrolysis of terminal, non-reducing beta-D-glucosyl residues with release of beta-D-glucose.. Functionally, hydrolyzes glycosides and monolignol glucosides. Can hydrolyze para-nitrophenyl beta-D-glucopyranoside (pNPGlc) in vitro. Hydrolyzes para-nitrophenyl beta-D-fucopyranoside, para-nitrophenyl beta-D-galactopyranoside and para-nitrophenyl beta-D-xylopyranoside in vitro. Hydrolyzes the monolignol glucosides coniferin and syringin with high catalytic efficiencies. This chain is Beta-glucosidase 18, found in Oryza sativa subsp. japonica (Rice).